Reading from the N-terminus, the 123-residue chain is Small ribosomal subunit protein uS12c (123 aa).

The protein belongs to the universal ribosomal protein uS12 family. Part of the 30S ribosomal subunit.

Its subcellular location is the plastid. The protein localises to the chloroplast. Its function is as follows. With S4 and S5 plays an important role in translational accuracy. Located at the interface of the 30S and 50S subunits. This Huperzia lucidula (Shining clubmoss) protein is Small ribosomal subunit protein uS12c (rps12).